Consider the following 85-residue polypeptide: Large ribosomal subunit protein bL27 (85 aa).

The disordered stretch occupies residues 1–26 (MAHKKAGGSTRNGRDSESKRLGVKRF).

The protein belongs to the bacterial ribosomal protein bL27 family.

The sequence is that of Large ribosomal subunit protein bL27 from Saccharophagus degradans (strain 2-40 / ATCC 43961 / DSM 17024).